A 558-amino-acid chain; its full sequence is Potassium-transporting ATPase potassium-binding subunit (558 aa).

The next 12 membrane-spanning stretches (helical) occupy residues 1 to 21 (MEIILFLTMMVMIAYVFSGYL), 66 to 86 (FNGFMGLITFVLLIVQQWLFL), 127 to 147 (MIVMTYLMFTSSASGYAVCIA), 166 to 186 (IVRFIVRVLLPLSCLISILLM), 245 to 265 (IWSDFIEMGSMMLLPMSMLFL), 281 to 301 (ALILFVAMFFIFIAILTLTMW), 327 to 347 (FGAGLSALFTVITTAFTTGSV), 354 to 374 (LTPLGGLGPMVLMMLNVVFGG), 377 to 397 (VGLMNLLIYVLLTVFICSLMV), 416 to 436 (IVLVFLIHPILILVFSALAFM), 482 to 502 (ISTGIIMLLSRYIPIILQLLI), and 531 to 551 (IVFIVLLSGLTFIPVLLLGPI).

This sequence belongs to the KdpA family. The system is composed of three essential subunits: KdpA, KdpB and KdpC.

Its subcellular location is the cell membrane. In terms of biological role, part of the high-affinity ATP-driven potassium transport (or Kdp) system, which catalyzes the hydrolysis of ATP coupled with the electrogenic transport of potassium into the cytoplasm. This subunit binds the extracellular potassium ions and delivers the ions to the membrane domain of KdpB through an intramembrane tunnel. In Staphylococcus aureus (strain bovine RF122 / ET3-1), this protein is Potassium-transporting ATPase potassium-binding subunit.